The chain runs to 275 residues: Voltage-dependent calcium channel gamma-5 subunit (275 aa).

Transmembrane regions (helical) follow at residues 8-28 (ALTLLSSVFAVCGLGLLGIAV), 103-123 (FPLVSLFFMFIGFILSNIGHI), 129-149 (ILAFVSGIFFILSGLSLVVGL), and 181-201 (FAAISFLLTESAGVMSVYLFM).

This sequence belongs to the PMP-22/EMP/MP20 family. CACNG subfamily. In terms of assembly, the L-type calcium channel is composed of five subunits: alpha-1, alpha-2/delta, beta and gamma. Acts as an auxiliary subunit for AMPA-selective glutamate receptors (AMPARs). Found in a complex with GRIA1, GRIA2, GRIA3, GRIA4, CNIH2, CNIH3, CACNG2, CACNG3, CACNG4, CACNG7 and CACNG8. Interacts with GRIA1, GRIA2, GRIA3 and GRIA4.

The protein localises to the membrane. The protein resides in the postsynaptic density membrane. Its function is as follows. Regulates the gating properties of AMPA-selective glutamate receptors (AMPARs). Modulates their gating properties by accelerating their rates of activation, deactivation and desensitization. Displays subunit-specific AMPA receptor regulation. Shows specificity for GRIA1, GRIA4 and the long isoform of GRIA2. According to PubMed:18817736, shows only specificity for GRIA2 and specifically to the form of GRIA2 for which a single amino acid in the pore region has been edited from a glutamine to an arginine residue. Thought to stabilize the calcium channel in an inactivated (closed) state. This Rattus norvegicus (Rat) protein is Voltage-dependent calcium channel gamma-5 subunit (Cacng5).